We begin with the raw amino-acid sequence, 257 residues long: Zinc transporter ZupT (257 aa).

3 consecutive transmembrane segments (helical) span residues 5–25 (LILT…GVLG), 32–52 (VLAF…LMEM), and 61–81 (GMSP…YFGL). Fe(2+) contacts are provided by N120 and E123. The Zn(2+) site is built by E123 and H148. Fe(2+) contacts are provided by N149, E152, and E181. E152 serves as a coordination point for Zn(2+). A run of 3 helical transmembrane segments spans residues 182–202 (IFGG…IVMA), 203–223 (AIMA…LMPL), and 236–256 (GVLC…TIGI).

The protein belongs to the ZIP transporter (TC 2.A.5) family. ZupT subfamily.

Its subcellular location is the cell inner membrane. It carries out the reaction Zn(2+)(in) = Zn(2+)(out). Functionally, mediates zinc uptake. May also transport other divalent cations. This chain is Zinc transporter ZupT, found in Salmonella arizonae (strain ATCC BAA-731 / CDC346-86 / RSK2980).